A 189-amino-acid chain; its full sequence is Peptidyl-tRNA hydrolase (189 aa).

Tyrosine 17 provides a ligand contact to tRNA. Histidine 22 (proton acceptor) is an active-site residue. 3 residues coordinate tRNA: phenylalanine 65, asparagine 67, and asparagine 113.

The protein belongs to the PTH family. As to quaternary structure, monomer.

The protein resides in the cytoplasm. The enzyme catalyses an N-acyl-L-alpha-aminoacyl-tRNA + H2O = an N-acyl-L-amino acid + a tRNA + H(+). Functionally, hydrolyzes ribosome-free peptidyl-tRNAs (with 1 or more amino acids incorporated), which drop off the ribosome during protein synthesis, or as a result of ribosome stalling. Catalyzes the release of premature peptidyl moieties from peptidyl-tRNA molecules trapped in stalled 50S ribosomal subunits, and thus maintains levels of free tRNAs and 50S ribosomes. This chain is Peptidyl-tRNA hydrolase, found in Mycoplasma genitalium (strain ATCC 33530 / DSM 19775 / NCTC 10195 / G37) (Mycoplasmoides genitalium).